Consider the following 261-residue polypeptide: Global transcriptional regulator CodY (261 aa).

Residues 1-159 (MPNLLEKTRK…ASTVVGIQLL (159 aa)) form a GAF domain region. A DNA-binding region (H-T-H motif) is located at residues 207–226 (ASVIADRIGITRSVIVNALR).

This sequence belongs to the CodY family.

It localises to the cytoplasm. DNA-binding global transcriptional regulator which is involved in the adaptive response to starvation and acts by directly or indirectly controlling the expression of numerous genes in response to nutrient availability. During rapid exponential growth, CodY is highly active and represses genes whose products allow adaptation to nutrient depletion. The chain is Global transcriptional regulator CodY from Streptococcus agalactiae serotype III (strain NEM316).